The chain runs to 66 residues: Large ribosomal subunit protein uL29 (66 aa).

This sequence belongs to the universal ribosomal protein uL29 family.

The sequence is that of Large ribosomal subunit protein uL29 from Francisella tularensis subsp. tularensis (strain FSC 198).